A 185-amino-acid polypeptide reads, in one-letter code: Ribosome-recycling factor (185 aa).

The protein belongs to the RRF family.

Its subcellular location is the cytoplasm. Functionally, responsible for the release of ribosomes from messenger RNA at the termination of protein biosynthesis. May increase the efficiency of translation by recycling ribosomes from one round of translation to another. The protein is Ribosome-recycling factor of Bacillus cereus (strain G9842).